We begin with the raw amino-acid sequence, 99 residues long: A-type ATP synthase subunit F (99 aa).

The protein belongs to the V-ATPase F subunit family. In terms of assembly, has multiple subunits with at least A(3), B(3), C, D, E, F, H, I and proteolipid K(x).

The protein resides in the cell membrane. Its function is as follows. Component of the A-type ATP synthase that produces ATP from ADP in the presence of a proton gradient across the membrane. The sequence is that of A-type ATP synthase subunit F from Methanococcus vannielii (strain ATCC 35089 / DSM 1224 / JCM 13029 / OCM 148 / SB).